A 327-amino-acid polypeptide reads, in one-letter code: Gamma-gliadin (327 aa).

The N-terminal stretch at Met-1–Ala-19 is a signal peptide. Positions Gln-42–Gln-81 are enriched in low complexity. The segment at Gln-42–Gln-169 is disordered. Pro residues-rich tracts occupy residues Gln-82–Pro-91, Gln-100–Pro-109, and Gln-118–Pro-127. Residues Phe-128–Gln-169 show a composition bias toward low complexity.

It belongs to the gliadin/glutenin family.

In terms of biological role, gliadin is the major seed storage protein in wheat. This Triticum aestivum (Wheat) protein is Gamma-gliadin.